The primary structure comprises 203 residues: Putative 3-methyladenine DNA glycosylase (203 aa).

This sequence belongs to the DNA glycosylase MPG family.

The sequence is that of Putative 3-methyladenine DNA glycosylase from Desulfitobacterium hafniense (strain Y51).